A 4061-amino-acid chain; its full sequence is Hybrid PKS-NRPS synthetase tasS (4061 aa).

The region spanning 7-472 (QEPIAVIGMA…GTNAHAIIEG (466 aa)) is the Ketosynthase family 3 (KS3) domain. C180 is a catalytic residue. The interval 586–911 (VFTGQGAQWP…RQKNDVEELL (326 aa)) is malonyl-CoA:ACP transacylase (MAT) domain. Positions 977–1113 (HPLLGRRCVE…ATVNVTFHEP (137 aa)) are N-terminal hotdog fold. The segment at 977–1280 (HPLLGRRCVE…VRVQPFSVAG (304 aa)) is dehydratase (DH) domain. A PKS/mFAS DH domain is found at 977–1282 (HPLLGRRCVE…VQPFSVAGPQ (306 aa)). H1010 acts as the Proton acceptor; for dehydratase activity in catalysis. The C-terminal hotdog fold stretch occupies residues 1128–1282 (LANAEPQRLY…VQPFSVAGPQ (155 aa)). Catalysis depends on D1188, which acts as the Proton donor; for dehydratase activity. A methyltransferase (MT) domain region spans residues 1425–1619 (LDRFYEEGFE…GFNGVETHTP (195 aa)). The ketoreductase (KR) domain stretch occupies residues 2153–2325 (TYFLLGLSGE…GVVGSDMAIG (173 aa)). The 80-residue stretch at 2437–2516 (EAIKVVFDTF…LLVEEAVDKL (80 aa)) folds into the Carrier 1 domain. S2475 carries the O-(pantetheine 4'-phosphoryl)serine modification. The disordered stretch occupies residues 2527 to 2617 (EHGGEPDLTQ…QKHQEQTSQS (91 aa)). Positions 2556 to 2576 (TSAASSSDTGSDSSPTSNSVS) are enriched in low complexity. A compositionally biased stretch (polar residues) spans 2577-2592 (ETQTGTPLETPMSTTE). The interval 2632–3077 (QMTFGQNRFW…ELATWDTESE (446 aa)) is condensation (C) domain. The tract at residues 3103–3510 (QVIADHPDAV…RGYLTVEGRI (408 aa)) is adenylation (A) (KR) domain. Residues 3633–3712 (QNLTATERTL…SMAALLDDGV (80 aa)) enclose the Carrier 2 domain. S3672 carries the post-translational modification O-(pantetheine 4'-phosphoryl)serine. The reductase (RED) domain stretch occupies residues 3813–3969 (DIDVVLHCAA…LSPLEDAVEA (157 aa)).

In the C-terminal section; belongs to the NRP synthetase family.

The enzyme catalyses (2S,4S)-4-hydroxy-4-methylglutamate + 8 malonyl-CoA + 3 S-adenosyl-L-methionine + ATP + 8 NADPH + 11 H(+) = (2S)-3-[(2S)-3,5-dioxo-4-[(2E,4R,6R,8E,10E,12E)-4,6,12-trimethyltetradeca-2,8,10,12-tetraenoyl]pyrrolidin-2-yl]-2-hydroxy-2-methylpropanoate + AMP + 3 S-adenosyl-L-homocysteine + 8 CO2 + diphosphate + 8 NADP(+) + 8 CoA + 6 H2O. It functions in the pathway secondary metabolite biosynthesis. Functionally, hybrid PKS-NRPS synthetase; part of the gene cluster that mediates the biosynthesis of the tetramic acids Sch210971 and Sch210972, potential anti-HIV fungal natural product that contain a decalin core. The PKS module of tasS together with the enoylreductase tasC catalyze the formation of the polyketide unit which is then conjugated to 4-hydroxyl-4-methyl glutamate (HMG) by the condensation domain of the tasS NRPS module. One unique structural feature of Sch210971 and Sch210972 is the tetramic acid motif proposed to be derived from the non-proteinogenic amino acid HMG, by a Dieckmann-type condensation catalyzed by the reductase domain of tasS. The aldolase tasA catalyzes the aldol condensation of 2 molecules of pyruvic acid to yield the intermediate 4-hydroxyl-4-methyl-2-oxoglutarate (HMOG), which can then be stereoselectively transaminated, may be by tasG, to form HMG. The Diels-Alderase tas3 then uses the Dieckmann product of tasS as substrate and catalyzes the Diels-Alder cycloaddition to form the decalin ring of Sch210971 and Sch210972. In Hapsidospora irregularis, this protein is Hybrid PKS-NRPS synthetase tasS.